A 662-amino-acid polypeptide reads, in one-letter code: DNA ligase (662 aa).

Residues 31-35 (DKDYD) and 79-80 (SL) each bind NAD(+). Lys121 serves as the catalytic N6-AMP-lysine intermediate. The NAD(+) site is built by Arg143, Glu177, and Lys313. Positions 406, 409, 422, and 428 each coordinate Zn(2+). The BRCT domain maps to 586-662 (VLESPFMGKT…LSEEEFENMI (77 aa)).

It belongs to the NAD-dependent DNA ligase family. LigA subfamily. It depends on Mg(2+) as a cofactor. Mn(2+) is required as a cofactor.

It carries out the reaction NAD(+) + (deoxyribonucleotide)n-3'-hydroxyl + 5'-phospho-(deoxyribonucleotide)m = (deoxyribonucleotide)n+m + AMP + beta-nicotinamide D-nucleotide.. DNA ligase that catalyzes the formation of phosphodiester linkages between 5'-phosphoryl and 3'-hydroxyl groups in double-stranded DNA using NAD as a coenzyme and as the energy source for the reaction. It is essential for DNA replication and repair of damaged DNA. The sequence is that of DNA ligase from Clostridium perfringens (strain SM101 / Type A).